Consider the following 669-residue polypeptide: MDRPVAAAAAASAASCEGAGGPGPGPGASWRPSRVAGGASASSRHPSIETLDSPTGSHVEWCKQLIAATISSQISGSVTSENVSRDYKALRDGNKLAQMEEAPLFPGESIKAIVKDVIYICPFMGAVSGTLTVTDFKMYFKNVERDPHFVLDVPLGVISRVEKIGAQSHGDNSCGIEIVCKDMRNLRLAYKQEEQRKLGIFENLNKHAFPLSNGQVLFAFNYKEKFPVNGWKVYDPVSEYKRQGLPNESWKISKINSNYEFCDTYPAIIVVPTSVKDDDLSKVAAFRAKGRVPVLSWIHPESQATITRCSQPLVGPNDKRCKEDEKYLQTIMDANAQSHKLTIFDARQNSVADTNKAKGGGYENESAYPNAELIFLEIHNIHVMRESLRKLKEIVYPSIDESHWLSNVDGTHWLEYIRVLLAGAVRIADKIESGKTSVVIHCSDGWDRTSQLTSLAMLMLDSYYRTIKGFEALIEKEWISFGHRFALRVGHGDDNHADADRSPIFLQFIDCVWQMTRQFPSAFEFNELFLITILDHLYSCLFGTFLCNCEQQRIKEDVYTNTISLWSYINSQLDEFSNPFFVNYENHVLYPVASMSHLELWVNYYVRWNPRMRPQMPIHQNLKELLAIKAELQKRVEDLQREMATRTISSSSERGSSPTHSATPVHTSV.

N-acetylmethionine is present on M1. Residues 1–17 (MDRPVAAAAAASAASCE) are compositionally biased toward low complexity. The tract at residues 1–55 (MDRPVAAAAAASAASCEGAGGPGPGPGASWRPSRVAGGASASSRHPSIETLDSPT) is disordered. Phosphoserine is present on residues S47 and S53. One can recognise a GRAM domain in the interval 94–165 (NKLAQMEEAP…GVISRVEKIG (72 aa)). Residues 230 to 605 (GWKVYDPVSE…SHLELWVNYY (376 aa)) form the Myotubularin phosphatase domain. A 1,2-diacyl-sn-glycero-3-phospho-(1D-myo-inositol-3-phosphate)-binding residues include N355, N380, and I381. C442 acts as the Phosphocysteine intermediate in catalysis. S443, D444, G445, W446, D447, R448, and R488 together coordinate a 1,2-diacyl-sn-glycero-3-phospho-(1D-myo-inositol-3-phosphate). Residue S443 participates in phosphate binding. Phosphate contacts are provided by G445, W446, D447, and R448. A required for dimerization region spans residues 612-669 (MRPQMPIHQNLKELLAIKAELQKRVEDLQREMATRTISSSSERGSSPTHSATPVHTSV). Positions 644–669 (ATRTISSSSERGSSPTHSATPVHTSV) are disordered. A compositionally biased stretch (low complexity) spans 649 to 661 (SSSSERGSSPTHS).

Belongs to the protein-tyrosine phosphatase family. Non-receptor class myotubularin subfamily. Homodimer. Widely expressed. Detected in skeletal muscle, heart, lung, liver and brain.

The protein resides in the cell membrane. It localises to the cytoplasm. It carries out the reaction a 1,2-diacyl-sn-glycero-3-phospho-(1D-myo-inositol-3-phosphate) + H2O = a 1,2-diacyl-sn-glycero-3-phospho-(1D-myo-inositol) + phosphate. The enzyme catalyses 1,2-dioctanoyl-sn-glycero-3-phospho-(1-D-myo-inositol-3-phosphate) + H2O = 1,2-dioctanoyl-sn-glycero-3-phospho-(1D-myo-inositol) + phosphate. It catalyses the reaction a 1,2-diacyl-sn-glycero-3-phospho-(1D-myo-inositol-3,5-bisphosphate) + H2O = a 1,2-diacyl-sn-glycero-3-phospho-(1D-myo-inositol-5-phosphate) + phosphate. Its function is as follows. Lipid phosphatase that specifically dephosphorylates the D-3 position of phosphatidylinositol 3-phosphate, generating phosphatidylinositol. Could also dephosphorylate phosphatidylinositol 3,5-bisphosphate to produce phosphatidylinositol 5-phosphate. This is Phosphatidylinositol-3-phosphate phosphatase MTMR1 from Mus musculus (Mouse).